Consider the following 364-residue polypeptide: Mitoferrin-2 (364 aa).

The span at 1 to 17 shows a compositional bias: gly residues; sequence MELEGRGAGGVAGGPAA. Disordered regions lie at residues 1–28 and 40–60; these read MELE…ESAL and GAGG…PDSG. The segment covering 18–27 has biased composition (low complexity); sequence GPGRSPGESA. Solcar repeat units follow at residues 70–158, 168–252, and 259–352; these read ATVT…LKKT, NSHI…LQEH, and YNPS…FKYL. The next 6 membrane-spanning stretches (helical) occupy residues 72–91, 133–152, 170–189, 227–246, 261–280, and 327–346; these read VTTH…CVMY, GLNV…FACY, HIAN…AAMN, SYTT…FMTY, PSSH…AATT, and GVQA…WSVY.

The protein belongs to the mitochondrial carrier (TC 2.A.29) family. In terms of tissue distribution, ubiquitous. Expressed in placenta, lung, kidney, pancreas, liver, brain, skeletal muscle and heart.

It localises to the mitochondrion inner membrane. It catalyses the reaction Fe(2+)(in) = Fe(2+)(out). Its function is as follows. Mitochondrial iron transporter that mediates iron uptake. Probably required for heme synthesis of hemoproteins and Fe-S cluster assembly in non-erythroid cells. This chain is Mitoferrin-2 (SLC25A28), found in Homo sapiens (Human).